We begin with the raw amino-acid sequence, 145 residues long: D-aminoacyl-tRNA deacylase (145 aa).

The Gly-cisPro motif, important for rejection of L-amino acids motif lies at 137–138; that stretch reads GP.

It belongs to the DTD family. Homodimer.

The protein resides in the cytoplasm. The catalysed reaction is glycyl-tRNA(Ala) + H2O = tRNA(Ala) + glycine + H(+). It carries out the reaction a D-aminoacyl-tRNA + H2O = a tRNA + a D-alpha-amino acid + H(+). In terms of biological role, an aminoacyl-tRNA editing enzyme that deacylates mischarged D-aminoacyl-tRNAs. Also deacylates mischarged glycyl-tRNA(Ala), protecting cells against glycine mischarging by AlaRS. Acts via tRNA-based rather than protein-based catalysis; rejects L-amino acids rather than detecting D-amino acids in the active site. By recycling D-aminoacyl-tRNA to D-amino acids and free tRNA molecules, this enzyme counteracts the toxicity associated with the formation of D-aminoacyl-tRNA entities in vivo and helps enforce protein L-homochirality. This chain is D-aminoacyl-tRNA deacylase, found in Carboxydothermus hydrogenoformans (strain ATCC BAA-161 / DSM 6008 / Z-2901).